Here is a 1058-residue protein sequence, read N- to C-terminus: Isoleucine--tRNA ligase (1058 aa).

A 'HIGH' region motif is present at residues 48 to 58 (PYTTGHIHLGT). The short motif at 596-600 (KMSKS) is the 'KMSKS' region element. K599 lines the ATP pocket.

Belongs to the class-I aminoacyl-tRNA synthetase family. IleS type 2 subfamily. As to quaternary structure, monomer. Requires Zn(2+) as cofactor.

The protein localises to the cytoplasm. It carries out the reaction tRNA(Ile) + L-isoleucine + ATP = L-isoleucyl-tRNA(Ile) + AMP + diphosphate. Catalyzes the attachment of isoleucine to tRNA(Ile). As IleRS can inadvertently accommodate and process structurally similar amino acids such as valine, to avoid such errors it has two additional distinct tRNA(Ile)-dependent editing activities. One activity is designated as 'pretransfer' editing and involves the hydrolysis of activated Val-AMP. The other activity is designated 'posttransfer' editing and involves deacylation of mischarged Val-tRNA(Ile). The sequence is that of Isoleucine--tRNA ligase from Methanosarcina acetivorans (strain ATCC 35395 / DSM 2834 / JCM 12185 / C2A).